A 447-amino-acid chain; its full sequence is ATP-dependent protease ATPase subunit HslU (447 aa).

ATP contacts are provided by residues Ile-18, 60–65 (GVGKTE), Asp-259, Glu-325, and Arg-397.

It belongs to the ClpX chaperone family. HslU subfamily. A double ring-shaped homohexamer of HslV is capped on each side by a ring-shaped HslU homohexamer. The assembly of the HslU/HslV complex is dependent on binding of ATP.

The protein localises to the cytoplasm. Its function is as follows. ATPase subunit of a proteasome-like degradation complex; this subunit has chaperone activity. The binding of ATP and its subsequent hydrolysis by HslU are essential for unfolding of protein substrates subsequently hydrolyzed by HslV. HslU recognizes the N-terminal part of its protein substrates and unfolds these before they are guided to HslV for hydrolysis. This is ATP-dependent protease ATPase subunit HslU from Burkholderia thailandensis (strain ATCC 700388 / DSM 13276 / CCUG 48851 / CIP 106301 / E264).